Reading from the N-terminus, the 157-residue chain is Cyclic pyranopterin monophosphate synthase (157 aa).

Substrate is bound by residues Met74 to His76 and Met112 to Glu113. Residue Asp127 is part of the active site.

It belongs to the MoaC family. Homohexamer; trimer of dimers.

The enzyme catalyses (8S)-3',8-cyclo-7,8-dihydroguanosine 5'-triphosphate = cyclic pyranopterin phosphate + diphosphate. Its pathway is cofactor biosynthesis; molybdopterin biosynthesis. Catalyzes the conversion of (8S)-3',8-cyclo-7,8-dihydroguanosine 5'-triphosphate to cyclic pyranopterin monophosphate (cPMP). This Campylobacter jejuni (strain RM1221) protein is Cyclic pyranopterin monophosphate synthase.